Here is a 127-residue protein sequence, read N- to C-terminus: Large ribosomal subunit protein bL12 (127 aa).

The protein belongs to the bacterial ribosomal protein bL12 family. Homodimer. Part of the ribosomal stalk of the 50S ribosomal subunit. Forms a multimeric L10(L12)X complex, where L10 forms an elongated spine to which 2 to 4 L12 dimers bind in a sequential fashion. Binds GTP-bound translation factors.

Its function is as follows. Forms part of the ribosomal stalk which helps the ribosome interact with GTP-bound translation factors. Is thus essential for accurate translation. The sequence is that of Large ribosomal subunit protein bL12 from Acidiphilium cryptum (strain JF-5).